A 384-amino-acid polypeptide reads, in one-letter code: Urea transporter 1 (384 aa).

The segment at 1-23 (MDDNPTAVKLDQGGNQAPQGQGR) is disordered. Helical transmembrane passes span 61 to 81 (ISQVVFVSNPISGILILVGLL), 85 to 105 (PWCALNGCVGTVVSTLTALLL), 111 to 131 (AITAGLQGYNATLVGILMAIY), 138 to 158 (FWWLLFPVSAMSMTCPIFSSA), and 169 to 189 (PVFTLPFNMALSMYLSATGHF). N206 carries N-linked (GlcNAc...) asparagine glycosylation. 3 consecutive transmembrane segments (helical) span residues 237 to 257 (GGIFLGAILLSSPLMCLHAAI), 279 to 299 (GLWGFNSSLACIAIGGMFMAL), and 327 to 347 (VVGLPSCTWPFCLATLLFLLL).

This sequence belongs to the urea transporter family. In terms of assembly, homotrimer; each subunit contains a pore through which urea permeates. Identified in a complex with STOM.

Its subcellular location is the cell membrane. It localises to the basolateral cell membrane. The catalysed reaction is urea(in) = urea(out). Its function is as follows. Mediates the transport of urea driven by a concentration gradient across the cell membranes of erythrocytes and the renal inner medullary collecting duct which is critical to the urinary concentrating mechanism. Facilitates water transport in erythrocytes. This Ovis aries (Sheep) protein is Urea transporter 1 (SLC14A1).